Here is a 67-residue protein sequence, read N- to C-terminus: Large ribosomal subunit protein uL29 (67 aa).

This sequence belongs to the universal ribosomal protein uL29 family.

This chain is Large ribosomal subunit protein uL29, found in Rhizorhabdus wittichii (strain DSM 6014 / CCUG 31198 / JCM 15750 / NBRC 105917 / EY 4224 / RW1) (Sphingomonas wittichii).